Consider the following 156-residue polypeptide: MAAGLPPVQYSIDTDADLETRLAGKGLKVVEIFSEWCGPCKSVLPTFRRIRLDKDDENALLFLTVCAEKCNFLETAKEHRGKSEPLFLLYRNGQLKARIEGANTPALNQQVLSLTPANADVDDLEENPMYLAKMERERIARGETVKDAKGAKKGKK.

Positions 2–116 (AAGLPPVQYS…LNQQVLSLTP (115 aa)) constitute a Thioredoxin domain. An intrachain disulfide couples cysteine 37 to cysteine 40.

Consists of at least 3 heavy chains (alpha, beta and gamma), 2 intermediate chains and 8 light chains.

It localises to the cell projection. The protein localises to the cilium. It is found in the flagellum. The protein resides in the cytoplasm. Its subcellular location is the cytoskeleton. It localises to the flagellum axoneme. Its function is as follows. May be involved in regulating the redox state of functionally important thiol groups within dynein. The protein is Dynein 16 kDa light chain, flagellar outer arm of Chlamydomonas reinhardtii (Chlamydomonas smithii).